Here is a 272-residue protein sequence, read N- to C-terminus: Ethanolamine ammonia-lyase small subunit (272 aa).

3 residues coordinate adenosylcob(III)alamin: valine 161, glutamate 182, and cysteine 211.

The protein belongs to the EutC family. The basic unit is a heterodimer which dimerizes to form tetramers. The heterotetramers trimerize; 6 large subunits form a core ring with 6 small subunits projecting outwards. Adenosylcob(III)alamin is required as a cofactor.

It is found in the bacterial microcompartment. The enzyme catalyses ethanolamine = acetaldehyde + NH4(+). It functions in the pathway amine and polyamine degradation; ethanolamine degradation. In terms of biological role, catalyzes the deamination of various vicinal amino-alcohols to oxo compounds. Allows this organism to utilize ethanolamine as the sole source of nitrogen and carbon in the presence of external vitamin B12. This chain is Ethanolamine ammonia-lyase small subunit, found in Pseudomonas putida (strain W619).